A 274-amino-acid polypeptide reads, in one-letter code: Envelope glycoprotein L (274 aa).

The N-terminal stretch at M1–S21 is a signal peptide. In terms of domain architecture, gL betaherpesvirus-type spans V51–V251. A disulfide bridge links C156 with C161.

It belongs to the herpesviridae glycoprotein L (gL) family. Betaherpesvirinae gL subfamily. In terms of assembly, interacts with glycoprotein H (gH); this interaction is necessary for the correct processing and cell surface expression of gH.

Its subcellular location is the virion membrane. It localises to the host cell membrane. The protein resides in the host Golgi apparatus. The protein localises to the host trans-Golgi network. Its function is as follows. The heterodimer glycoprotein H-glycoprotein L is required for the fusion of viral and plasma membranes leading to virus entry into the host cell. Acts as a functional inhibitor of gH and maintains gH in an inhibited form. Upon binding to host integrins, gL dissociates from gH leading to activation of the viral fusion glycoproteins gB and gH. This Murid herpesvirus 1 (strain Smith) (MuHV-1) protein is Envelope glycoprotein L.